Here is a 116-residue protein sequence, read N- to C-terminus: Large ribosomal subunit protein bL20 (116 aa).

The protein belongs to the bacterial ribosomal protein bL20 family.

In terms of biological role, binds directly to 23S ribosomal RNA and is necessary for the in vitro assembly process of the 50S ribosomal subunit. It is not involved in the protein synthesizing functions of that subunit. The polypeptide is Large ribosomal subunit protein bL20 (Acaryochloris marina (strain MBIC 11017)).